Here is a 384-residue protein sequence, read N- to C-terminus: MERFVQFLRRGNGLMAASLAAGSCAEEVAKAEGAGCRDDAAALRLKGVAMATILVAGVVGVGLPLAGRKRRALRTDSAAFVAAKAFAAGVILATGFVHMLHDAEHALSSPCLPAHPWRSFPFPGFVAMSAALATLVLDFLATRFYEGKHRAETERVKAAAAAALAASSASDDDITVVTVTEDDNDNKAPLLQPHSHSHSHPHGHGHGHELAQPEGSGGEGEVPAQVRSVVVSQILEMGIVSHSVIIGLSLGVSRSPCTIRPLVAALSFHQFFEGFALGGCIAQAQFKTLSAAIMACFFAITTPAGIAAGAGVASFYNANSPRALVVEGILDSVSAGILIYMSLVDLIAADFLGGKMTGSTRQQVMAYIALFLGALSMSSLAIWA.

A signal peptide spans 1–25 (MERFVQFLRRGNGLMAASLAAGSCA). Over 26–46 (EEVAKAEGAGCRDDAAALRLK) the chain is Extracellular. The chain crosses the membrane as a helical span at residues 47 to 67 (GVAMATILVAGVVGVGLPLAG). The Cytoplasmic segment spans residues 68-79 (RKRRALRTDSAA). Residues 80-100 (FVAAKAFAAGVILATGFVHML) traverse the membrane as a helical segment. Residues 101–119 (HDAEHALSSPCLPAHPWRS) lie on the Extracellular side of the membrane. The helical transmembrane segment at 120 to 140 (FPFPGFVAMSAALATLVLDFL) threads the bilayer. At 141-227 (ATRFYEGKHR…GEGEVPAQVR (87 aa)) the chain is on the cytoplasmic side. The segment at 185–222 (DNKAPLLQPHSHSHSHPHGHGHGHELAQPEGSGGEGEV) is disordered. Residues 195 to 205 (SHSHSHPHGHG) show a composition bias toward basic residues. A helical transmembrane segment spans residues 228–248 (SVVVSQILEMGIVSHSVIIGL). Residues 249-261 (SLGVSRSPCTIRP) lie on the Extracellular side of the membrane. Residues 262 to 282 (LVAALSFHQFFEGFALGGCIA) traverse the membrane as a helical segment. Residues 283–291 (QAQFKTLSA) are Cytoplasmic-facing. A helical transmembrane segment spans residues 292 to 312 (AIMACFFAITTPAGIAAGAGV). Residues 313–323 (ASFYNANSPRA) are Extracellular-facing. A helical transmembrane segment spans residues 324 to 344 (LVVEGILDSVSAGILIYMSLV). At 345–363 (DLIAADFLGGKMTGSTRQQ) the chain is on the cytoplasmic side. Residues 364 to 384 (VMAYIALFLGALSMSSLAIWA) traverse the membrane as a helical segment.

Belongs to the ZIP transporter (TC 2.A.5) family.

The protein resides in the cell membrane. Zinc transporter that may be involved in zinc uptake from the rhizosphere. This Oryza sativa subsp. japonica (Rice) protein is Zinc transporter 7 (ZIP7).